A 337-amino-acid polypeptide reads, in one-letter code: Anthranilate phosphoribosyltransferase (337 aa).

Residues glycine 81, 84–85 (GD), serine 89, 91–94 (NVST), 109–117 (KHGNRAATS), and alanine 121 each bind 5-phospho-alpha-D-ribose 1-diphosphate. Glycine 81 provides a ligand contact to anthranilate. Serine 93 provides a ligand contact to Mg(2+). Asparagine 112 contributes to the anthranilate binding site. Arginine 167 contributes to the anthranilate binding site. Residues aspartate 226 and glutamate 227 each contribute to the Mg(2+) site.

This sequence belongs to the anthranilate phosphoribosyltransferase family. As to quaternary structure, homodimer. The cofactor is Mg(2+).

The enzyme catalyses N-(5-phospho-beta-D-ribosyl)anthranilate + diphosphate = 5-phospho-alpha-D-ribose 1-diphosphate + anthranilate. It participates in amino-acid biosynthesis; L-tryptophan biosynthesis; L-tryptophan from chorismate: step 2/5. Catalyzes the transfer of the phosphoribosyl group of 5-phosphorylribose-1-pyrophosphate (PRPP) to anthranilate to yield N-(5'-phosphoribosyl)-anthranilate (PRA). This chain is Anthranilate phosphoribosyltransferase, found in Methylorubrum populi (strain ATCC BAA-705 / NCIMB 13946 / BJ001) (Methylobacterium populi).